A 124-amino-acid chain; its full sequence is Putative calmodulin-3 (124 aa).

EF-hand domains are found at residues 1–18 (GCIT…LGQN), 19–54 (PTEA…KIKD), 56–91 (DFEE…LGEK), and 92–124 (LTDE…MMAK). Cys2, Glu7, Asp32, Asp34, Asn36, Thr38, Glu43, Asp69, Asp71, Asn73, and Glu80 together coordinate Ca(2+). Lys91 is subject to N6,N6,N6-trimethyllysine. 5 residues coordinate Ca(2+): Asp105, Asp107, Asp109, Gln111, and Glu116.

The protein belongs to the calmodulin family. As to expression, not detected in the organs tested.

Functionally, calmodulin mediates the control of a large number of enzymes, ion channels and other proteins by Ca(2+). Among the enzymes to be stimulated by the calmodulin-Ca(2+) complex are a number of protein kinases and phosphatases. This is Putative calmodulin-3 (PCM3) from Solanum tuberosum (Potato).